The chain runs to 436 residues: 3-ketoacyl-CoA thiolase (436 aa).

The active-site Acyl-thioester intermediate is Cys99. Active-site proton acceptor residues include His392 and Cys422.

Belongs to the thiolase-like superfamily. Thiolase family. As to quaternary structure, heterotetramer of two alpha chains (FadJ) and two beta chains (FadI).

Its subcellular location is the cytoplasm. It carries out the reaction an acyl-CoA + acetyl-CoA = a 3-oxoacyl-CoA + CoA. It functions in the pathway lipid metabolism; fatty acid beta-oxidation. In terms of biological role, catalyzes the final step of fatty acid oxidation in which acetyl-CoA is released and the CoA ester of a fatty acid two carbons shorter is formed. This chain is 3-ketoacyl-CoA thiolase, found in Alteromonas mediterranea (strain DSM 17117 / CIP 110805 / LMG 28347 / Deep ecotype).